Reading from the N-terminus, the 1025-residue chain is Leucyl-cystinyl aminopeptidase (1025 aa).

Methionine 1 is subject to N-acetylmethionine. The Cytoplasmic portion of the chain corresponds to methionine 1–arginine 109. Positions leucine 53–leucine 54 match the Dileucine internalization motif motif. Tyrosine 70 is modified (phosphotyrosine). The short motif at leucine 76–leucine 77 is the Dileucine internalization motif element. Phosphoserine is present on residues serine 80 and serine 91. A tankyrase binding region spans residues arginine 96–glycine 101. Residues threonine 110–leucine 131 form a helical; Signal-anchor for type II membrane protein membrane-spanning segment. Residues proline 132–leucine 1025 are Extracellular-facing. Residues asparagine 145, asparagine 184, asparagine 215, asparagine 256, and asparagine 266 are each glycosylated (N-linked (GlcNAc...) asparagine). A substrate-binding site is contributed by glutamate 295. Residues asparagine 368 and asparagine 374 are each glycosylated (N-linked (GlcNAc...) asparagine). Residue glycine 428–asparagine 432 coordinates substrate. N-linked (GlcNAc...) asparagine glycosylation is present at asparagine 447. Histidine 464 is a binding site for Zn(2+). The active-site Proton acceptor is glutamate 465. Residues histidine 468 and glutamate 487 each contribute to the Zn(2+) site. Residues asparagine 525, asparagine 578, asparagine 664, asparagine 682, asparagine 695, asparagine 758, asparagine 834, asparagine 850, and asparagine 989 are each glycosylated (N-linked (GlcNAc...) asparagine).

This sequence belongs to the peptidase M1 family. In terms of assembly, homodimer. Binds tankyrases 1 and 2. It depends on Zn(2+) as a cofactor.

The protein localises to the cell membrane. Its subcellular location is the endomembrane system. The catalysed reaction is Release of an N-terminal amino acid, Cys-|-Xaa-, in which the half-cystine residue is involved in a disulfide loop, notably in oxytocin or vasopressin. Hydrolysis rates on a range of aminoacyl arylamides exceed that for the cystinyl derivative, however.. In terms of biological role, release of an N-terminal amino acid, cleave before cysteine, leucine as well as other amino acids. Degrades peptide hormones such as oxytocin, vasopressin and angiotensin III, and plays a role in maintaining homeostasis during pregnancy. May be involved in the inactivation of neuronal peptides in the brain. Cleaves Met-enkephalin and dynorphin. Binds angiotensin IV and may be the angiotensin IV receptor in the brain. The protein is Leucyl-cystinyl aminopeptidase (Lnpep) of Mus musculus (Mouse).